Here is a 58-residue protein sequence, read N- to C-terminus: UPF0391 membrane protein Maqu_2901 (58 aa).

2 helical membrane-spanning segments follow: residues 4-24 (WAIVCLVIAVIAGILGFGGIA) and 28-48 (AGFAKILFFVFLVLLVVSLVV).

This sequence belongs to the UPF0391 family.

Its subcellular location is the cell membrane. In Marinobacter nauticus (strain ATCC 700491 / DSM 11845 / VT8) (Marinobacter aquaeolei), this protein is UPF0391 membrane protein Maqu_2901.